Reading from the N-terminus, the 923-residue chain is Isoleucine--tRNA ligase (923 aa).

The 'HIGH' region signature appears at 57–67 (PYANGDIHIGT). Glu561 is an L-isoleucyl-5'-AMP binding site. The 'KMSKS' region signature appears at 602–606 (AMHKS). ATP is bound at residue Lys605. Zn(2+) contacts are provided by Cys895, Cys898, Cys915, and Cys918.

This sequence belongs to the class-I aminoacyl-tRNA synthetase family. IleS type 1 subfamily. Monomer. The cofactor is Zn(2+).

The protein localises to the cytoplasm. The catalysed reaction is tRNA(Ile) + L-isoleucine + ATP = L-isoleucyl-tRNA(Ile) + AMP + diphosphate. Its function is as follows. Catalyzes the attachment of isoleucine to tRNA(Ile). As IleRS can inadvertently accommodate and process structurally similar amino acids such as valine, to avoid such errors it has two additional distinct tRNA(Ile)-dependent editing activities. One activity is designated as 'pretransfer' editing and involves the hydrolysis of activated Val-AMP. The other activity is designated 'posttransfer' editing and involves deacylation of mischarged Val-tRNA(Ile). The chain is Isoleucine--tRNA ligase from Brachyspira hyodysenteriae (strain ATCC 49526 / WA1).